Consider the following 1077-residue polypeptide: Insulin receptor substrate 2-B (1077 aa).

Residues 1-66 are disordered; it reads MAGVLCPTEE…APASTAEDDV (66 aa). 2 consecutive short sequence motifs (YXXM motif) follow at residues 33-36 and 147-150; these read YRRM and YFAM. Residues 65–170 form the PH domain; sequence DVRKRGYLRK…WYQALSELIN (106 aa). The 105-residue stretch at 195-299 folds into the IRS-type PTB domain; it reads FKEVWQVNVK…DTMKALKAYS (105 aa). Disordered regions lie at residues 342 to 373, 428 to 464, and 476 to 495; these read ETVVGTPPSAKNNSFRFRTSSEGEGTMTRPFR, VCSSNGHGSASETLTRPSSSSVCGSPSDGGFISSDEY, and VRSNTPDSLGNTPPIQEENT. Polar residues-rich tracts occupy residues 350-364 and 428-444; these read SAKNNSFRFRTSSEG and VCSSNGHGSASETLTRP. The segment covering 445–457 has biased composition (low complexity); it reads SSSSVCGSPSDGG. A compositionally biased stretch (polar residues) spans 477 to 495; the sequence is RSNTPDSLGNTPPIQEENT. Positions 499–502 match the YXXM motif 3 motif; that stretch reads YMSM. Positions 530 to 544 are enriched in polar residues; it reads KPTNAASQQKSQTAV. The interval 530–571 is disordered; the sequence is KPTNAASQQKSQTAVSLDEDSEETNKQFAYAESPKLKDSSHV. 6 consecutive short sequence motifs (YXXM motif) follow at residues 595–598, 608–611, 634–637, 666–669, 713–716, and 891–894; these read YMPM, YLPM, YMMM, YMDM, YVPM, and YTTM.

Post-translationally, phosphorylated by INSR.

Its function is as follows. Potentiates insulin signaling. The sequence is that of Insulin receptor substrate 2-B (irs2-b) from Xenopus laevis (African clawed frog).